Consider the following 178-residue polypeptide: Large ribosomal subunit protein bL25 (178 aa).

It belongs to the bacterial ribosomal protein bL25 family. CTC subfamily. As to quaternary structure, part of the 50S ribosomal subunit; part of the 5S rRNA/L5/L18/L25 subcomplex. Contacts the 5S rRNA. Binds to the 5S rRNA independently of L5 and L18.

In terms of biological role, this is one of the proteins that binds to the 5S RNA in the ribosome where it forms part of the central protuberance. The polypeptide is Large ribosomal subunit protein bL25 (Helicobacter pylori (strain P12)).